The following is a 531-amino-acid chain: NADH-quinone oxidoreductase subunit N (531 aa).

13 consecutive transmembrane segments (helical) span residues 13-33 (LAPILIVLGAAVLGVLIEAFA), 45-65 (LALLAAAGAFGAIAWRWAEVI), 85-105 (PALAAQGIIAILAFVGILVIA), 150-170 (LFSVGGMLVFPAAGDLLTLFI), 200-220 (YFLLGAFSSALLLFGIALLYG), 242-262 (GLLVVGLVLLISGLLFKVGAV), 289-309 (VAAFGALLRVVYVVAPAMTWD), 310-330 (IQPFLWVVAVLTMVVGTVLAI), 339-359 (LAYSSVAHAGFLLVGVVAMSP), 365-385 (VFFYLLAYGLATIGAFALVAL), 415-435 (VATVFALYLLSFAGIPLTSGF), 460-480 (ASAAAAFFYVRIIVLMFFTSP), and 496-516 (GFTAVAVALTAAATLVLGVWP).

This sequence belongs to the complex I subunit 2 family. In terms of assembly, NDH-1 is composed of 14 different subunits. Subunits NuoA, H, J, K, L, M, N constitute the membrane sector of the complex.

It is found in the cell membrane. The catalysed reaction is a quinone + NADH + 5 H(+)(in) = a quinol + NAD(+) + 4 H(+)(out). Functionally, NDH-1 shuttles electrons from NADH, via FMN and iron-sulfur (Fe-S) centers, to quinones in the respiratory chain. The immediate electron acceptor for the enzyme in this species is believed to be a menaquinone. Couples the redox reaction to proton translocation (for every two electrons transferred, four hydrogen ions are translocated across the cytoplasmic membrane), and thus conserves the redox energy in a proton gradient. The sequence is that of NADH-quinone oxidoreductase subunit N from Beutenbergia cavernae (strain ATCC BAA-8 / DSM 12333 / CCUG 43141 / JCM 11478 / NBRC 16432 / NCIMB 13614 / HKI 0122).